We begin with the raw amino-acid sequence, 519 residues long: Pleckstrin homology domain-containing family A member 8 (519 aa).

Residues 1–93 (MEGVLYKWTN…WLVALGSAKA (93 aa)) enclose the PH domain. Thr139 carries the post-translational modification Phosphothreonine. Ser145 is subject to Phosphoserine. Thr153 is modified (phosphothreonine). The glycolipid transfer protein homology domain stretch occupies residues 310 to 519 (TFFSTMNTSF…VHGLESDEVV (210 aa)).

As to quaternary structure, homodimer. Interacts with ARF1; the interaction together with phosphatidylinositol 4-phosphate binding is required for FAPP2 GlcCer transfer ability. As to expression, expressed in kidney cell lines.

The protein localises to the golgi apparatus. It is found in the trans-Golgi network membrane. The protein resides in the membrane. In terms of biological role, cargo transport protein that is required for apical transport from the Golgi complex. Transports AQP2 from the trans-Golgi network (TGN) to sites of AQP2 phosphorylation. Mediates the non-vesicular transport of glucosylceramide (GlcCer) from the trans-Golgi network (TGN) to the plasma membrane and plays a pivotal role in the synthesis of complex glycosphingolipids. Binding of both phosphatidylinositol 4-phosphate (PIP) and ARF1 are essential for the GlcCer transfer ability. Also required for primary cilium formation, possibly by being involved in the transport of raft lipids to the apical membrane, and for membrane tubulation. This Homo sapiens (Human) protein is Pleckstrin homology domain-containing family A member 8 (PLEKHA8).